The sequence spans 792 residues: Kinesin-like protein KIFC2 (792 aa).

Disordered regions lie at residues 22 to 45 and 142 to 184; these read AAAVSDPGDPTQKSGGQPRGRRRP and QGTQ…QEHQ. A compositionally biased stretch (polar residues) spans 142 to 169; that stretch reads QGTQPTCPVQPSTLDGSLSQEESSSQPT. Residues 186–347 adopt a coiled-coil conformation; the sequence is LQLEEEQRVW…ARMASLRQGC (162 aa). A Kinesin motor domain is found at 409–732; the sequence is NIRVLCRLRP…LKFAERVGQV (324 aa). Residue 486-493 participates in ATP binding; it reads GQTGTGKT. Residues 734 to 792 are disordered; sequence LGPARRRRAPRSGTPSSLSTDTPLTGTSCTPTPSPGSPPSTSPNSCSGLTLEPPGDPPP. A compositionally biased stretch (low complexity) spans 744–764; it reads RSGTPSSLSTDTPLTGTSCTP. Residues 765-774 are compositionally biased toward pro residues; the sequence is TPSPGSPPST.

It belongs to the TRAFAC class myosin-kinesin ATPase superfamily. Kinesin family. As to expression, present in axons and dendrites of neurons in the central and peripheral nervous systems.

It localises to the cytoplasm. The protein resides in the cytoskeleton. Its function is as follows. May play a role in microtubule-dependent retrograde axonal transport. May function as the motor for the transport of multivesicular body (MVB)-like organelles in dendrites. This chain is Kinesin-like protein KIFC2 (Kifc2), found in Mus musculus (Mouse).